A 361-amino-acid chain; its full sequence is U7 snRNA-associated Sm-like protein LSm11 (361 aa).

Residues Met-1 to Val-26 form a disordered region. Phosphoserine is present on residues Ser-15 and Ser-21. Arg-41 carries the post-translational modification Omega-N-methylarginine. A disordered region spans residues Arg-67–Pro-142. The segment covering Thr-76–Ser-96 has biased composition (low complexity). Lys-121 is covalently cross-linked (Glycyl lysine isopeptide (Lys-Gly) (interchain with G-Cter in SUMO2)). Phosphoserine is present on Ser-155. Positions Ser-155 to Leu-230 constitute a Sm domain. Residues Val-172–Thr-205 are SM 1. The interval Arg-268–Asp-335 is disordered. Ser-281 is subject to Phosphoserine. Over residues Gly-307–Gly-323 the composition is skewed to polar residues. Residues Ile-344–Val-357 are SM 2.

The protein belongs to the snRNP Sm proteins family. Component of the heptameric ring U7 snRNP complex, or U7 Sm protein core complex, at least composed of LSM10, LSM11, SNRPB, SNRPD3, SNRPE, SNRPF, SNRPG and U7 snRNA. Formation of the U7 snRNP is an ATP-dependent process mediated by a specialized SMN complex containing at least the Sm protein core complex and additionally, the U7-specific LSM10 and LSM11 proteins. Identified in a histone pre-mRNA complex, at least composed of ERI1, LSM11, SLBP, SNRPB, SYNCRIP and YBX1. Interacts (via the Sm domains) with CLNS1A. Interacts with PRMT5, SMN, ZNF473 and WDR77. In terms of processing, not methylated.

The protein localises to the nucleus. Component of the U7 snRNP complex that is involved in the histone 3'-end pre-mRNA processing. Increases U7 snRNA levels but not histone 3'-end pre-mRNA processing activity, when overexpressed. Required for cell cycle progression from G1 to S phases. Binds specifically to the Sm-binding site of U7 snRNA. The protein is U7 snRNA-associated Sm-like protein LSm11 of Mus musculus (Mouse).